Here is a 222-residue protein sequence, read N- to C-terminus: Glutathione S-transferase A5 (222 aa).

Residue Ala-2 is modified to N-acetylalanine. The GST N-terminal domain maps to 3–83 (EKPKLHYSNA…YIASKYNLYG (81 aa)). N6-succinyllysine is present on Lys-4. Residues Tyr-9, Arg-45, 54-55 (QV), and 67-68 (QT) each bind glutathione. Residues 85 to 208 (DMKERALIDM…QPGSQRKPPM (124 aa)) enclose the GST C-terminal domain.

The protein belongs to the GST superfamily. Alpha family. Homodimer. As to expression, expression not detected.

It localises to the cytoplasm. It carries out the reaction RX + glutathione = an S-substituted glutathione + a halide anion + H(+). This chain is Glutathione S-transferase A5 (GSTA5), found in Homo sapiens (Human).